Reading from the N-terminus, the 130-residue chain is Protein ApaG (130 aa).

The 125-residue stretch at 3-127 (RALTRDIEVV…FSLDSPGLLR (125 aa)) folds into the ApaG domain. Residues 63–83 (EVTGPGVVGEQPRLSPGDTYE) form a disordered region.

The sequence is that of Protein ApaG from Rhizobium etli (strain ATCC 51251 / DSM 11541 / JCM 21823 / NBRC 15573 / CFN 42).